The following is a 166-amino-acid chain: ATP synthase subunit b (166 aa).

The chain crosses the membrane as a helical span at residues 7-27 (QFSLGLFILQIILFVGLILLL).

Belongs to the ATPase B chain family. In terms of assembly, F-type ATPases have 2 components, F(1) - the catalytic core - and F(0) - the membrane proton channel. F(1) has five subunits: alpha(3), beta(3), gamma(1), delta(1), epsilon(1). F(0) has three main subunits: a(1), b(2) and c(10-14). The alpha and beta chains form an alternating ring which encloses part of the gamma chain. F(1) is attached to F(0) by a central stalk formed by the gamma and epsilon chains, while a peripheral stalk is formed by the delta and b chains.

It localises to the cell inner membrane. In terms of biological role, f(1)F(0) ATP synthase produces ATP from ADP in the presence of a proton or sodium gradient. F-type ATPases consist of two structural domains, F(1) containing the extramembraneous catalytic core and F(0) containing the membrane proton channel, linked together by a central stalk and a peripheral stalk. During catalysis, ATP synthesis in the catalytic domain of F(1) is coupled via a rotary mechanism of the central stalk subunits to proton translocation. Functionally, component of the F(0) channel, it forms part of the peripheral stalk, linking F(1) to F(0). The protein is ATP synthase subunit b of Flavobacterium psychrophilum (strain ATCC 49511 / DSM 21280 / CIP 103535 / JIP02/86).